Reading from the N-terminus, the 624-residue chain is Chaperone protein HtpG (624 aa).

The a; substrate-binding stretch occupies residues M1–R336. The tract at residues E337–K552 is b. The c stretch occupies residues L553–S624.

Belongs to the heat shock protein 90 family. Homodimer.

The protein resides in the cytoplasm. In terms of biological role, molecular chaperone. Has ATPase activity. The chain is Chaperone protein HtpG from Shigella dysenteriae serotype 1 (strain Sd197).